The chain runs to 186 residues: Peptidyl-tRNA hydrolase (186 aa).

Residue Tyr14 coordinates tRNA. Residue His19 is the Proton acceptor of the active site. Tyr61, Asn63, and Asn107 together coordinate tRNA.

It belongs to the PTH family. Monomer.

The protein localises to the cytoplasm. It catalyses the reaction an N-acyl-L-alpha-aminoacyl-tRNA + H2O = an N-acyl-L-amino acid + a tRNA + H(+). Hydrolyzes ribosome-free peptidyl-tRNAs (with 1 or more amino acids incorporated), which drop off the ribosome during protein synthesis, or as a result of ribosome stalling. Functionally, catalyzes the release of premature peptidyl moieties from peptidyl-tRNA molecules trapped in stalled 50S ribosomal subunits, and thus maintains levels of free tRNAs and 50S ribosomes. The polypeptide is Peptidyl-tRNA hydrolase (Helicobacter pylori (strain G27)).